The sequence spans 605 residues: Class II receptor tyrosine kinase (605 aa).

An Ig-like C2-type domain is found at Met1–Asp67. The Extracellular segment spans residues Met1 to Val84. Residues Asn26, Asn44, and Asn72 are each glycosylated (N-linked (GlcNAc...) asparagine). The helical transmembrane segment at Leu85–Val105 threads the bilayer. The Cytoplasmic portion of the chain corresponds to Trp106–Val605. The tract at residues Glu209–Gln230 is disordered. Residues Arg221–Gln230 are compositionally biased toward polar residues. A Protein kinase domain is found at Ile346–Val605. ATP is bound by residues Ile352–Val360 and Lys393. The active-site Proton acceptor is the Asp496. Tyr527 is subject to Phosphotyrosine; by autocatalysis.

Belongs to the protein kinase superfamily. Tyr protein kinase family. Insulin receptor subfamily. In terms of processing, phosphorylated.

The protein localises to the cell membrane. The enzyme catalyses L-tyrosyl-[protein] + ATP = O-phospho-L-tyrosyl-[protein] + ADP + H(+). This chain is Class II receptor tyrosine kinase (TK), found in Geodia cydonium (Sponge).